The sequence spans 130 residues: Small ribosomal subunit protein uS9 (130 aa).

It belongs to the universal ribosomal protein uS9 family.

This Pseudomonas fluorescens (strain Pf0-1) protein is Small ribosomal subunit protein uS9.